The sequence spans 298 residues: HTH-type transcriptional regulator ArgP (298 aa).

An HTH lysR-type domain is found at 4-60; the sequence is VDYRWVAALDAVIAQRGFERAAEKLCITQSAVSQRIKQLEKLMAQPLLVREQPPRPT. The H-T-H motif DNA-binding region spans 21 to 40; that stretch reads FERAAEKLCITQSAVSQRIK.

It belongs to the LysR transcriptional regulatory family. Homodimer.

Its function is as follows. Controls the transcription of genes involved in arginine and lysine metabolism. The protein is HTH-type transcriptional regulator ArgP of Photobacterium profundum (strain SS9).